Consider the following 177-residue polypeptide: Inorganic pyrophosphatase (177 aa).

Substrate is bound by residues K31, R45, and Y57. Residues D67, D72, and D104 each contribute to the Mg(2+) site. A substrate-binding site is contributed by Y142.

This sequence belongs to the PPase family. Homohexamer. The cofactor is Mg(2+).

The protein resides in the cytoplasm. The enzyme catalyses diphosphate + H2O = 2 phosphate + H(+). Its function is as follows. Catalyzes the hydrolysis of inorganic pyrophosphate (PPi) forming two phosphate ions. This is Inorganic pyrophosphatase from Neisseria meningitidis serogroup A / serotype 4A (strain DSM 15465 / Z2491).